The following is a 467-amino-acid chain: 3-isopropylmalate dehydratase large subunit (467 aa).

[4Fe-4S] cluster contacts are provided by C347, C407, and C410.

This sequence belongs to the aconitase/IPM isomerase family. LeuC type 1 subfamily. As to quaternary structure, heterodimer of LeuC and LeuD. It depends on [4Fe-4S] cluster as a cofactor.

It carries out the reaction (2R,3S)-3-isopropylmalate = (2S)-2-isopropylmalate. The protein operates within amino-acid biosynthesis; L-leucine biosynthesis; L-leucine from 3-methyl-2-oxobutanoate: step 2/4. Functionally, catalyzes the isomerization between 2-isopropylmalate and 3-isopropylmalate, via the formation of 2-isopropylmaleate. In Synechococcus sp. (strain JA-2-3B'a(2-13)) (Cyanobacteria bacterium Yellowstone B-Prime), this protein is 3-isopropylmalate dehydratase large subunit.